Here is a 405-residue protein sequence, read N- to C-terminus: Pulcherriminic acid synthase (405 aa).

Residues Lys-62, Asn-229, Arg-285, and Cys-353 each contribute to the heme site.

It belongs to the cytochrome P450 family. Homodimer. Requires heme as cofactor.

The enzyme catalyses cyclo(L-leucyl-L-leucyl) + 6 reduced [2Fe-2S]-[ferredoxin] + 3 O2 + 4 H(+) = pulcherriminic acid + 6 oxidized [2Fe-2S]-[ferredoxin] + 4 H2O. In terms of biological role, involved in the biosynthesis of pulcherrimin, a red extracellular pigment. Catalyzes the oxidation of cyclo(L-Leu-L-Leu) (cLL) to yield pulcherriminic acid which forms pulcherrimin via a nonenzymic reaction with Fe(3+). Substrates with small alkyl groups (cAA, cLG, cLP) exhibit weaker binding to CYP134A1, but substrates with larger hydrophobic side chains bind in a similar regime to cLL. The protein is Pulcherriminic acid synthase (cypX) of Bacillus subtilis (strain 168).